The primary structure comprises 633 residues: Threonine--tRNA ligase (633 aa).

Residues 1-61 enclose the TGS domain; that stretch reads MPAIRLPDGS…DHDVDLAIVT (61 aa). Residues 242–533 are catalytic; that stretch reads DHRKLGRQLD…LIEHHAGAMP (292 aa). Zn(2+) is bound by residues cysteine 333, histidine 384, and histidine 510.

It belongs to the class-II aminoacyl-tRNA synthetase family. Homodimer. It depends on Zn(2+) as a cofactor.

The protein resides in the cytoplasm. It carries out the reaction tRNA(Thr) + L-threonine + ATP = L-threonyl-tRNA(Thr) + AMP + diphosphate + H(+). Its function is as follows. Catalyzes the attachment of threonine to tRNA(Thr) in a two-step reaction: L-threonine is first activated by ATP to form Thr-AMP and then transferred to the acceptor end of tRNA(Thr). Also edits incorrectly charged L-seryl-tRNA(Thr). The sequence is that of Threonine--tRNA ligase from Laribacter hongkongensis (strain HLHK9).